Reading from the N-terminus, the 380-residue chain is Outer membrane protein assembly factor BamB (380 aa).

The first 18 residues, 1 to 18, serve as a signal peptide directing secretion; it reads MVQWKHAALLALALAVVG. A lipid anchor (N-palmitoyl cysteine) is attached at Cys-19. A lipid anchor (S-diacylglycerol cysteine) is attached at Cys-19.

Belongs to the BamB family. As to quaternary structure, part of the Bam complex.

It is found in the cell outer membrane. Its function is as follows. Part of the outer membrane protein assembly complex, which is involved in assembly and insertion of beta-barrel proteins into the outer membrane. In Pseudomonas aeruginosa (strain ATCC 15692 / DSM 22644 / CIP 104116 / JCM 14847 / LMG 12228 / 1C / PRS 101 / PAO1), this protein is Outer membrane protein assembly factor BamB.